The chain runs to 434 residues: Gamma-glutamyl phosphate reductase (434 aa).

It belongs to the gamma-glutamyl phosphate reductase family.

Its subcellular location is the cytoplasm. The catalysed reaction is L-glutamate 5-semialdehyde + phosphate + NADP(+) = L-glutamyl 5-phosphate + NADPH + H(+). Its pathway is amino-acid biosynthesis; L-proline biosynthesis; L-glutamate 5-semialdehyde from L-glutamate: step 2/2. Functionally, catalyzes the NADPH-dependent reduction of L-glutamate 5-phosphate into L-glutamate 5-semialdehyde and phosphate. The product spontaneously undergoes cyclization to form 1-pyrroline-5-carboxylate. This Pelotomaculum thermopropionicum (strain DSM 13744 / JCM 10971 / SI) protein is Gamma-glutamyl phosphate reductase.